We begin with the raw amino-acid sequence, 76 residues long: MSARQIYYSDKYFDEDFEYRHVMLPKDIAKMVPKNHLMSEAEWRSIGVQQSHGWIHYMKHEPEPHILLFRRKVTGQ.

Belongs to the CKS family. In terms of assembly, forms a homohexamer that can probably bind six kinase subunits.

In terms of biological role, binds to the catalytic subunit of the cyclin dependent kinases and is essential for their biological function. This is Cyclin-dependent kinases regulatory subunit from Patella vulgata (Common limpet).